The chain runs to 289 residues: YLVSPAAYAALGAYMFLLILIGFPVNFLTLYVTLEHKKLRTPLNYILLNLAVADLFMVLGGFTTTMYTSMHGYFVLGRLGCNLEGFFATLGGEIALWSLVVLAIERWIVVCKPISNFRFTEDNAIMGLAFSWVMALTCAVPPLVGWSRYIPEGMQCSCGVDYYTRAEGFNNESFVIYMFIVHFPIPLSVIFFCYGRLLCAVKEAAAAQQESETTQRAEKEVSRMVVILVIGFLVCWLPYASVAWWIFCNQGSDFGPIFMTLPSFFAKRPAIYNPMIYICMNKQFRHCMI.

Topologically, residues 1-7 (YLVSPAA) are extracellular. Residues 8 to 32 (YAALGAYMFLLILIGFPVNFLTLYV) traverse the membrane as a helical segment. Over 33 to 44 (TLEHKKLRTPLN) the chain is Cytoplasmic. A helical transmembrane segment spans residues 45 to 67 (YILLNLAVADLFMVLGGFTTTMY). The Extracellular portion of the chain corresponds to 68–81 (TSMHGYFVLGRLGC). Residues C81 and C158 are joined by a disulfide bond. Residues 82 to 104 (NLEGFFATLGGEIALWSLVVLAI) traverse the membrane as a helical segment. Residues 105–107 (ERW) carry the 'Ionic lock' involved in activated form stabilization motif. Topologically, residues 105 to 123 (ERWIVVCKPISNFRFTEDN) are cytoplasmic. The chain crosses the membrane as a helical span at residues 124–144 (AIMGLAFSWVMALTCAVPPLV). Residues 145 to 173 (GWSRYIPEGMQCSCGVDYYTRAEGFNNES) lie on the Extracellular side of the membrane. A glycan (N-linked (GlcNAc...) asparagine) is linked at N171. A helical transmembrane segment spans residues 174–195 (FVIYMFIVHFPIPLSVIFFCYG). Residues 196–223 (RLLCAVKEAAAAQQESETTQRAEKEVSR) are Cytoplasmic-facing. A helical transmembrane segment spans residues 224 to 245 (MVVILVIGFLVCWLPYASVAWW). The Extracellular segment spans residues 246–257 (IFCNQGSDFGPI). Residues 258-279 (FMTLPSFFAKRPAIYNPMIYIC) traverse the membrane as a helical segment. K267 carries the post-translational modification N6-(retinylidene)lysine. Topologically, residues 280 to 289 (MNKQFRHCMI) are cytoplasmic.

The protein belongs to the G-protein coupled receptor 1 family. Opsin subfamily. In terms of processing, phosphorylated on some or all of the serine and threonine residues present in the C-terminal region. Post-translationally, contains one covalently linked retinal chromophore.

Its subcellular location is the membrane. It is found in the cell projection. The protein localises to the cilium. The protein resides in the photoreceptor outer segment. In terms of biological role, photoreceptor required for image-forming vision at low light intensity. While most salt water fish species use retinal as chromophore, most freshwater fish use 3-dehydroretinal, or a mixture of retinal and 3-dehydroretinal. Light-induced isomerization of 11-cis to all-trans retinal triggers a conformational change that activates signaling via G-proteins. Subsequent receptor phosphorylation mediates displacement of the bound G-protein alpha subunit by arrestin and terminates signaling. The polypeptide is Rhodopsin (rho) (Batrachocottus multiradiatus (Baikal sculpin)).